The sequence spans 397 residues: Acetate kinase (397 aa).

Asn-7 is a Mg(2+) binding site. Residue Lys-14 participates in ATP binding. Arg-90 contacts substrate. Asp-147 (proton donor/acceptor) is an active-site residue. ATP contacts are provided by residues 207 to 211 (HLGNG), 282 to 284 (DFR), and 330 to 334 (GLGEN). Glu-383 lines the Mg(2+) pocket.

This sequence belongs to the acetokinase family. Homodimer. Mg(2+) is required as a cofactor. Mn(2+) serves as cofactor.

The protein resides in the cytoplasm. The enzyme catalyses acetate + ATP = acetyl phosphate + ADP. It functions in the pathway metabolic intermediate biosynthesis; acetyl-CoA biosynthesis; acetyl-CoA from acetate: step 1/2. Functionally, catalyzes the formation of acetyl phosphate from acetate and ATP. Can also catalyze the reverse reaction. This Clostridium botulinum (strain Langeland / NCTC 10281 / Type F) protein is Acetate kinase.